A 726-amino-acid chain; its full sequence is Peroxisomal bifunctional enzyme (726 aa).

The tract at residues 1-284 (MAEYLRLPHS…FAERSAPKWS (284 aa)) is enoyl-CoA hydratase / isomerase. Lysine 38 is modified (N6-succinyllysine). Residue glycine 103 coordinates substrate. Residue lysine 167 is modified to N6-acetyllysine; alternate. Residue lysine 167 is modified to N6-succinyllysine; alternate. Position 173 is an N6-acetyllysine (lysine 173). Residue lysine 185 is modified to N6-succinyllysine. Lysine 221 bears the N6-acetyllysine; alternate mark. An N6-succinyllysine; alternate modification is found at lysine 221. 3 positions are modified to N6-succinyllysine: lysine 282, lysine 292, and lysine 333. The tract at residues 285–575 (TPSGASWKTA…DMLCELGRFG (291 aa)) is 3-hydroxyacyl-CoA dehydrogenase. Residues lysine 348 and lysine 352 each carry the N6-acetyllysine modification. Residues 352-371 (KSRQQCGQQRSGPKPRFSSS) form a disordered region. The segment covering 353–371 (SRQQCGQQRSGPKPRFSSS) has biased composition (polar residues). An N6-acetyllysine modification is found at lysine 467. At lysine 535 the chain carries N6-succinyllysine. 3 positions are modified to N6-acetyllysine; alternate: lysine 587, lysine 594, and lysine 713. Lysine 587, lysine 594, and lysine 713 each carry N6-succinyllysine; alternate. The Microbody targeting signal signature appears at 724–726 (SKL). An N6-succinyllysine modification is found at lysine 725.

This sequence in the N-terminal section; belongs to the enoyl-CoA hydratase/isomerase family. The protein in the C-terminal section; belongs to the 3-hydroxyacyl-CoA dehydrogenase family. In terms of assembly, monomer. Post-translationally, acetylated, leading to enhanced enzyme activity. Acetylation is enhanced by up to 80% after treatment either with trichostin A (TSA) or with nicotinamide (NAM) with highest increase on Lys-348. Acetylation and enzyme activity increased by about 1.5% on addition of fatty acids.

Its subcellular location is the peroxisome. It catalyses the reaction a (3S)-3-hydroxyacyl-CoA = a (2E)-enoyl-CoA + H2O. It carries out the reaction a 4-saturated-(3S)-3-hydroxyacyl-CoA = a (3E)-enoyl-CoA + H2O. The enzyme catalyses a (3Z)-enoyl-CoA = a 4-saturated (2E)-enoyl-CoA. The catalysed reaction is a (3E)-enoyl-CoA = a 4-saturated (2E)-enoyl-CoA. It catalyses the reaction a (3S)-3-hydroxyacyl-CoA + NAD(+) = a 3-oxoacyl-CoA + NADH + H(+). It carries out the reaction (2S,3S)-3-hydroxy-2-methylbutanoyl-CoA = (2E)-2-methylbut-2-enoyl-CoA + H2O. The enzyme catalyses (3S)-hydroxyhexadecanoyl-CoA + NAD(+) = 3-oxohexadecanoyl-CoA + NADH + H(+). The catalysed reaction is (3S)-hydroxyhexadecanoyl-CoA = (2E)-hexadecenoyl-CoA + H2O. It catalyses the reaction (2E)-hexadecenedioyl-CoA + H2O = (3S)-hydroxyhexadecanedioyl-CoA. It carries out the reaction (3S)-hydroxyhexadecanedioyl-CoA + NAD(+) = 3-oxohexadecanedioyl-CoA + NADH + H(+). The enzyme catalyses (3E,5Z)-tetradecadienoyl-CoA = (2E,5Z)-tetradecadienoyl-CoA. The catalysed reaction is (3E,5Z)-octadienoyl-CoA = (2E,5Z)-octadienoyl-CoA. It catalyses the reaction (3S)-hydroxydecanoyl-CoA + NAD(+) = 3-oxodecanoyl-CoA + NADH + H(+). It carries out the reaction (3E)-decenoyl-CoA = (2E)-decenoyl-CoA. The enzyme catalyses (3Z)-hexenoyl-CoA = (2E)-hexenoyl-CoA. The catalysed reaction is (3E)-hexenoyl-CoA = (2E)-hexenoyl-CoA. It catalyses the reaction (3S)-hydroxydecanoyl-CoA = (2E)-decenoyl-CoA + H2O. It carries out the reaction (3S)-hydroxyhexanoyl-CoA = (2E)-hexenoyl-CoA + H2O. Its pathway is lipid metabolism; fatty acid beta-oxidation. Enzyme activity enhanced by acetylation. In terms of biological role, peroxisomal trifunctional enzyme possessing 2-enoyl-CoA hydratase, 3-hydroxyacyl-CoA dehydrogenase, and delta 3, delta 2-enoyl-CoA isomerase activities. Catalyzes two of the four reactions of the long chain fatty acids peroxisomal beta-oxidation pathway. Can also use branched-chain fatty acids such as 2-methyl-2E-butenoyl-CoA as a substrate, which is hydrated into (2S,3S)-3-hydroxy-2-methylbutanoyl-CoA. Optimal isomerase for 2,5 double bonds into 3,5 form isomerization in a range of enoyl-CoA species. Also able to isomerize both 3-cis and 3-trans double bonds into the 2-trans form in a range of enoyl-CoA species. Regulates the amount of medium-chain dicarboxylic fatty acids which are essential regulators of all fatty acid oxidation pathways. Also involved in the degradation of long-chain dicarboxylic acids through peroxisomal beta-oxidation. The chain is Peroxisomal bifunctional enzyme (EHHADH) from Cavia porcellus (Guinea pig).